Consider the following 335-residue polypeptide: Heme A synthase (335 aa).

Transmembrane regions (helical) follow at residues 9–29 (VAIW…IGGF), 90–110 (YVHR…FIYF), 120–140 (VVIR…TGWY), 156–176 (MLTL…YQFF), 197–217 (VGII…VAGL), 255–275 (VQFI…VLTI), 283–303 (VYVM…TLLL), and 309–329 (IAIS…CFLC). His259 provides a ligand contact to heme. His313 contributes to the heme binding site.

It belongs to the COX15/CtaA family. Type 2 subfamily. Interacts with CtaB. Requires heme b as cofactor.

The protein resides in the cell membrane. It catalyses the reaction Fe(II)-heme o + 2 A + H2O = Fe(II)-heme a + 2 AH2. Its pathway is porphyrin-containing compound metabolism; heme A biosynthesis; heme A from heme O: step 1/1. In terms of biological role, catalyzes the conversion of heme O to heme A by two successive hydroxylations of the methyl group at C8. The first hydroxylation forms heme I, the second hydroxylation results in an unstable dihydroxymethyl group, which spontaneously dehydrates, resulting in the formyl group of heme A. This is Heme A synthase from Wolbachia sp. subsp. Brugia malayi (strain TRS).